The chain runs to 63 residues: Small ribosomal subunit protein bS21 (63 aa).

This sequence belongs to the bacterial ribosomal protein bS21 family.

This chain is Small ribosomal subunit protein bS21, found in Phocaeicola vulgatus (strain ATCC 8482 / DSM 1447 / JCM 5826 / CCUG 4940 / NBRC 14291 / NCTC 11154) (Bacteroides vulgatus).